We begin with the raw amino-acid sequence, 216 residues long: Ribosomal RNA small subunit methyltransferase G (216 aa).

S-adenosyl-L-methionine is bound by residues glycine 86, leucine 91, 137–138, and arginine 155; that span reads VE.

This sequence belongs to the methyltransferase superfamily. RNA methyltransferase RsmG family.

Its subcellular location is the cytoplasm. The enzyme catalyses guanosine(527) in 16S rRNA + S-adenosyl-L-methionine = N(7)-methylguanosine(527) in 16S rRNA + S-adenosyl-L-homocysteine. Functionally, specifically methylates the N7 position of guanine in position 527 of 16S rRNA. The sequence is that of Ribosomal RNA small subunit methyltransferase G from Lawsonia intracellularis (strain PHE/MN1-00).